Here is a 129-residue protein sequence, read N- to C-terminus: Cocaine- and amphetamine-regulated transcript protein (129 aa).

The first 27 residues, M1 to A27, serve as a signal peptide directing secretion. Y41 carries the post-translational modification Phosphotyrosine. S48 is modified (phosphoserine). Intrachain disulfides connect C95–C113, C101–C121, and C115–C128.

The protein belongs to the CART family. As to expression, neuroendocrine tissues. Predominantly expressed in the hypothalamus, pituitary, and longitudinal muscle-myenteric plexus. Abundant expression is also seen in the midbrain/thalamus and eye. A lower level expression is seen in the other brain regions and adrenal.

It is found in the secreted. In terms of biological role, satiety factor closely associated with the actions of leptin and neuropeptide y; this anorectic peptide inhibits both normal and starvation-induced feeding and completely blocks the feeding response induced by neuropeptide Y and regulated by leptin in the hypothalamus. The protein is Cocaine- and amphetamine-regulated transcript protein (Cartpt) of Rattus norvegicus (Rat).